The following is a 957-amino-acid chain: Glycine dehydrogenase (decarboxylating) (957 aa).

The residue at position 708 (Lys-708) is an N6-(pyridoxal phosphate)lysine.

The protein belongs to the GcvP family. The glycine cleavage system is composed of four proteins: P, T, L and H. The cofactor is pyridoxal 5'-phosphate.

The enzyme catalyses N(6)-[(R)-lipoyl]-L-lysyl-[glycine-cleavage complex H protein] + glycine + H(+) = N(6)-[(R)-S(8)-aminomethyldihydrolipoyl]-L-lysyl-[glycine-cleavage complex H protein] + CO2. In terms of biological role, the glycine cleavage system catalyzes the degradation of glycine. The P protein binds the alpha-amino group of glycine through its pyridoxal phosphate cofactor; CO(2) is released and the remaining methylamine moiety is then transferred to the lipoamide cofactor of the H protein. The chain is Glycine dehydrogenase (decarboxylating) from Pectobacterium atrosepticum (strain SCRI 1043 / ATCC BAA-672) (Erwinia carotovora subsp. atroseptica).